Reading from the N-terminus, the 197-residue chain is Recombination protein RecR (197 aa).

The segment at 57 to 72 (CSTCFGITESDPCHLC) adopts a C4-type zinc-finger fold. The Toprim domain maps to 79-174 (ASICVVEEPQ…KVTRLAHGIP (96 aa)).

Belongs to the RecR family.

May play a role in DNA repair. It seems to be involved in an RecBC-independent recombinational process of DNA repair. It may act with RecF and RecO. The polypeptide is Recombination protein RecR (Geotalea uraniireducens (strain Rf4) (Geobacter uraniireducens)).